The following is a 507-amino-acid chain: ATP synthase subunit alpha, chloroplastic (507 aa).

170-177 (GDRQTGKT) provides a ligand contact to ATP. Disordered regions lie at residues 278–325 (PRRP…TQAG), 392–430 (EPEA…APLP), and 452–471 (GQVQ…NKPE). Positions 282-303 (PGREAHPGDVPHLHPRPPERAA) are enriched in basic and acidic residues. The span at 305–322 (LSSQPGEGSTTASPTVET) shows a compositional bias: polar residues.

The protein belongs to the ATPase alpha/beta chains family. In terms of assembly, F-type ATPases have 2 components, CF(1) - the catalytic core - and CF(0) - the membrane proton channel. CF(1) has five subunits: alpha(3), beta(3), gamma(1), delta(1), epsilon(1). CF(0) has four main subunits: a, b, b' and c.

It is found in the plastid. The protein localises to the chloroplast thylakoid membrane. It carries out the reaction ATP + H2O + 4 H(+)(in) = ADP + phosphate + 5 H(+)(out). Its function is as follows. Produces ATP from ADP in the presence of a proton gradient across the membrane. The alpha chain is a regulatory subunit. The chain is ATP synthase subunit alpha, chloroplastic from Selaginella uncinata (Blue spike-moss).